Consider the following 325-residue polypeptide: tRNA U34 carboxymethyltransferase (325 aa).

Carboxy-S-adenosyl-L-methionine contacts are provided by residues Lys91, Trp105, Lys110, Gly130, 152 to 154, Met196, Tyr200, and Arg315; that span reads DPS.

The protein belongs to the class I-like SAM-binding methyltransferase superfamily. CmoB family. In terms of assembly, homotetramer.

The enzyme catalyses carboxy-S-adenosyl-L-methionine + 5-hydroxyuridine(34) in tRNA = 5-carboxymethoxyuridine(34) in tRNA + S-adenosyl-L-homocysteine + H(+). Its function is as follows. Catalyzes carboxymethyl transfer from carboxy-S-adenosyl-L-methionine (Cx-SAM) to 5-hydroxyuridine (ho5U) to form 5-carboxymethoxyuridine (cmo5U) at position 34 in tRNAs. In Aeromonas hydrophila subsp. hydrophila (strain ATCC 7966 / DSM 30187 / BCRC 13018 / CCUG 14551 / JCM 1027 / KCTC 2358 / NCIMB 9240 / NCTC 8049), this protein is tRNA U34 carboxymethyltransferase.